The chain runs to 235 residues: Transmembrane protein 215 (235 aa).

2 helical membrane-spanning segments follow: residues 12 to 32 (LVVA…VSGM) and 40 to 60 (IPLL…IALA). The disordered stretch occupies residues 99–145 (SDLESGKGSSDELAKKAGLRGKPPPQSQGEVSVASSINSPTPTEEGE). Residues 125–140 (SQGEVSVASSINSPTP) show a composition bias toward polar residues.

It is found in the membrane. In Homo sapiens (Human), this protein is Transmembrane protein 215 (TMEM215).